A 31-amino-acid polypeptide reads, in one-letter code: Cytochrome b6-f complex subunit 6 (31 aa).

The helical transmembrane segment at 3 to 23 (TLTSYFGFLLVALTITLVLFI) threads the bilayer.

Belongs to the PetL family. In terms of assembly, the 4 large subunits of the cytochrome b6-f complex are cytochrome b6, subunit IV (17 kDa polypeptide, PetD), cytochrome f and the Rieske protein, while the 4 small subunits are PetG, PetL, PetM and PetN. The complex functions as a dimer.

The protein resides in the plastid. Its subcellular location is the chloroplast thylakoid membrane. Component of the cytochrome b6-f complex, which mediates electron transfer between photosystem II (PSII) and photosystem I (PSI), cyclic electron flow around PSI, and state transitions. PetL is important for photoautotrophic growth as well as for electron transfer efficiency and stability of the cytochrome b6-f complex. The protein is Cytochrome b6-f complex subunit 6 of Populus alba (White poplar).